The following is a 95-amino-acid chain: MPKLAVVLLVLLILPLSYFDAAGGQAVQGDRRGNGLARYLQRNGRDNEAECQIDTPGSSWGKCCMTRMCGTMCCSRSVCTCVYHWRRGHGCSCPG.

The N-terminal stretch at M1–G24 is a signal peptide. A propeptide spanning residues Q25–R45 is cleaved from the precursor. A 4-carboxyglutamate modification is found at E50. The residue at position 56 (P56) is a 4-hydroxyproline. Intrachain disulfides connect C64–C73, C69–C81, C74–C91, and C79–C93.

This sequence belongs to the conotoxin D superfamily. Hetero-, homo- or pseudo-homodimer (identical sequence, different post-translational modifications). Expressed by the venom duct.

The protein localises to the secreted. Its function is as follows. Alpha-conotoxins act on postsynaptic membranes, they bind to the nicotinic acetylcholine receptors (nAChR) and thus inhibit them. Through its two C-terminal domains, this homodimeric protein would bind to two nAChR allosteric sites, located outside the nAChR C-loop of the principal binding face and at the adjacent binding interface in a clockwise direction. This toxin specifically blocks mammalian neuronal nAChR of the alpha-7/CHRNA7, alpha-3-beta-2/CHRNA3-CHRNB2 and alpha-4-beta-2/CHRNA4-CHRNB2 subtypes. In Conus capitaneus (Captain cone), this protein is Alpha-conotoxin-like Cp20.5.